The sequence spans 485 residues: Maturase K (485 aa).

Belongs to the intron maturase 2 family. MatK subfamily.

It localises to the plastid. The protein localises to the chloroplast. Its function is as follows. Usually encoded in the trnK tRNA gene intron. Probably assists in splicing its own and other chloroplast group II introns. The protein is Maturase K of Malus domestica (Apple).